Reading from the N-terminus, the 53-residue chain is uncharacterized protein (53 aa).

Residues 20 to 42 (ILFPVLLVFDTILIVVGIALILF) traverse the membrane as a helical segment.

It is found in the membrane. This is an uncharacterized protein from Archaeoglobus fulgidus (strain ATCC 49558 / DSM 4304 / JCM 9628 / NBRC 100126 / VC-16).